Here is a 195-residue protein sequence, read N- to C-terminus: Small ribosomal subunit protein uS4 (195 aa).

An S4 RNA-binding domain is found at 88 to 150 (RRLENVVYRL…SKNVELIKLA (63 aa)).

Belongs to the universal ribosomal protein uS4 family. Part of the 30S ribosomal subunit. Contacts protein S5. The interaction surface between S4 and S5 is involved in control of translational fidelity.

In terms of biological role, one of the primary rRNA binding proteins, it binds directly to 16S rRNA where it nucleates assembly of the body of the 30S subunit. With S5 and S12 plays an important role in translational accuracy. This chain is Small ribosomal subunit protein uS4, found in Fusobacterium nucleatum subsp. nucleatum (strain ATCC 25586 / DSM 15643 / BCRC 10681 / CIP 101130 / JCM 8532 / KCTC 2640 / LMG 13131 / VPI 4355).